Consider the following 385-residue polypeptide: 8-amino-7-oxononanoate synthase (385 aa).

Arg-21 contributes to the substrate binding site. Residue 108–109 (GF) coordinates pyridoxal 5'-phosphate. His-133 contributes to the substrate binding site. Pyridoxal 5'-phosphate contacts are provided by Ser-179, His-207, and Thr-233. Lys-236 is subject to N6-(pyridoxal phosphate)lysine. Thr-352 is a substrate binding site.

The protein belongs to the class-II pyridoxal-phosphate-dependent aminotransferase family. BioF subfamily. In terms of assembly, homodimer. Requires pyridoxal 5'-phosphate as cofactor.

It catalyses the reaction 6-carboxyhexanoyl-[ACP] + L-alanine + H(+) = (8S)-8-amino-7-oxononanoate + holo-[ACP] + CO2. It functions in the pathway cofactor biosynthesis; biotin biosynthesis. Its function is as follows. Catalyzes the decarboxylative condensation of pimeloyl-[acyl-carrier protein] and L-alanine to produce 8-amino-7-oxononanoate (AON), [acyl-carrier protein], and carbon dioxide. The sequence is that of 8-amino-7-oxononanoate synthase from Salmonella schwarzengrund (strain CVM19633).